The primary structure comprises 130 residues: MAENQYYGTGRRKSSSARVFLKPGSGKIVINQRSLEVYFGRETARMVVNQPLELVDMVTKFDMYITVKGGGISGQAGAIRHGITRALMEYDESLRGELRKAGFVTRDAREVERKKVGLRKARRRPQFSKR.

The protein belongs to the universal ribosomal protein uS9 family.

In Yersinia pseudotuberculosis serotype O:1b (strain IP 31758), this protein is Small ribosomal subunit protein uS9.